Consider the following 654-residue polypeptide: MASITSRASARASCSQANTRAGRVALSGGALLRPARPARSFVPARKQQQGAVRRGGALSARASAVEDIRKVLSDSSSPVAGQKYDYILVGGGTAACVLANRLSADGSKRVLVLEAGPDNTSRDVKIPAAITRLFRSPLDWNLFSELQEQLAERQIYMARGRLLGGSSATNATLYHRGAAGDYDAWGVEGWSSEDVLSWFVQAETNADFGPGAYHGSGGPMRVENPRYTNKQLHTAFFKAAEEVGLTPNSDFNDWSHDHAGYGTFQVMQDKGTRADMYRQYLKPVLGRRNLQVLTGAAVTKVNIDQAAGKAQALGVEFSTDGPTGERLSAELAPGGEVIMCAGAVHTPFLLKHSGVGPSAELKEFGIPVVSNLAGVGQNLQDQPACLTAAPVKEKYDGIAISDHIYNEKGQIRKRAIASYLLGGRGGLTSTGCDRGAFVRTAGQALPDLQVRFVPGMALDPDGVSTYVRFAKFQSQGLKWPSGITMQLIACRPQSTGSVGLKSADPFAPPKLSPGYLTDKDGADLATLRKGIHWARDVARSSALSEYLDGELFPGSGVVSDDQIDEYIRRSIHSSNAITGTCKMGNAGDSSSVVDNQLRVHGVEGLRVVDASVVPKIPGGQTGAPVVMIAERAAALLTGKATIGASAAAPATVAA.

A chloroplast-targeting transit peptide spans M1–A62. FAD-binding positions include T93–A94, E114, L162, S166, N170–L173, and V298. C432, R451, Y466, and Q486 together coordinate hexadecanoate. FAD is bound at residue G622.

Belongs to the GMC oxidoreductase family. Requires FAD as cofactor.

It is found in the plastid. Its subcellular location is the chloroplast. The catalysed reaction is a long-chain fatty acid + hnu + H(+) = a long-chain alkane + CO2. The enzyme catalyses hnu + hexadecanoate + H(+) = pentadecane + CO2. It catalyses the reaction hnu + octadecanoate + H(+) = heptadecane + CO2. It carries out the reaction heptadecanoate + hnu + H(+) = hexadecane + CO2. The catalysed reaction is hnu + tetradecanoate + H(+) = tridecane + CO2. The enzyme catalyses octanoate + hnu + H(+) = heptane + CO2. Activated by blue light and repressed by red light. Catalyzes the decarboxylation of free fatty acids to n-alkanes or n-alkenes in response to blue light. Substrate preference is toward fatty acids with C16 or C17 chains. Converts n-octanoic acid (C8 chain) more efficiently than palmitate (n-hexadecanoic acid, C16 chain) into n-heptane (C7 chain) and n-pentadecane (C15 chain), respectively, partly due to an autocatalytic effect of its n-heptane product. Saturated fatty acids are converted to alkanes, not alkenes. The decarboxylation is initiated through electron abstraction from the fatty acid by the photo-excited FAD. In Chlorella variabilis (Green alga), this protein is Fatty acid photodecarboxylase, chloroplastic.